The sequence spans 417 residues: Serine hydroxymethyltransferase (417 aa).

Residues L121 and 125–127 (GHL) each bind (6S)-5,6,7,8-tetrahydrofolate. K229 is subject to N6-(pyridoxal phosphate)lysine. 355–357 (SPF) provides a ligand contact to (6S)-5,6,7,8-tetrahydrofolate.

This sequence belongs to the SHMT family. In terms of assembly, homodimer. Pyridoxal 5'-phosphate serves as cofactor.

It is found in the cytoplasm. It catalyses the reaction (6R)-5,10-methylene-5,6,7,8-tetrahydrofolate + glycine + H2O = (6S)-5,6,7,8-tetrahydrofolate + L-serine. It participates in one-carbon metabolism; tetrahydrofolate interconversion. It functions in the pathway amino-acid biosynthesis; glycine biosynthesis; glycine from L-serine: step 1/1. In terms of biological role, catalyzes the reversible interconversion of serine and glycine with tetrahydrofolate (THF) serving as the one-carbon carrier. This reaction serves as the major source of one-carbon groups required for the biosynthesis of purines, thymidylate, methionine, and other important biomolecules. Also exhibits THF-independent aldolase activity toward beta-hydroxyamino acids, producing glycine and aldehydes, via a retro-aldol mechanism. The protein is Serine hydroxymethyltransferase of Yersinia enterocolitica serotype O:8 / biotype 1B (strain NCTC 13174 / 8081).